The chain runs to 299 residues: tRNA dimethylallyltransferase (299 aa).

13–20 (GPTASGKT) contacts ATP. Substrate is bound at residue 15-20 (TASGKT). The tract at residues 38-41 (DSRQ) is interaction with substrate tRNA.

The protein belongs to the IPP transferase family. Monomer. Mg(2+) serves as cofactor.

The enzyme catalyses adenosine(37) in tRNA + dimethylallyl diphosphate = N(6)-dimethylallyladenosine(37) in tRNA + diphosphate. Its function is as follows. Catalyzes the transfer of a dimethylallyl group onto the adenine at position 37 in tRNAs that read codons beginning with uridine, leading to the formation of N6-(dimethylallyl)adenosine (i(6)A). The chain is tRNA dimethylallyltransferase from Prochlorococcus marinus (strain MIT 9211).